The sequence spans 251 residues: Putative imidazole glycerol phosphate synthase subunit hisF2 (251 aa).

Asp130 is an active-site residue.

The protein belongs to the HisA/HisF family. As to quaternary structure, heterodimer of HisH and HisF.

It is found in the cytoplasm. The enzyme catalyses 5-[(5-phospho-1-deoxy-D-ribulos-1-ylimino)methylamino]-1-(5-phospho-beta-D-ribosyl)imidazole-4-carboxamide + L-glutamine = D-erythro-1-(imidazol-4-yl)glycerol 3-phosphate + 5-amino-1-(5-phospho-beta-D-ribosyl)imidazole-4-carboxamide + L-glutamate + H(+). It functions in the pathway amino-acid biosynthesis; L-histidine biosynthesis; L-histidine from 5-phospho-alpha-D-ribose 1-diphosphate: step 5/9. Its function is as follows. IGPS catalyzes the conversion of PRFAR and glutamine to IGP, AICAR and glutamate. The HisF subunit catalyzes the cyclization activity that produces IGP and AICAR from PRFAR using the ammonia provided by the HisH subunit. The polypeptide is Putative imidazole glycerol phosphate synthase subunit hisF2 (hisF2) (Pseudomonas aeruginosa (strain ATCC 15692 / DSM 22644 / CIP 104116 / JCM 14847 / LMG 12228 / 1C / PRS 101 / PAO1)).